We begin with the raw amino-acid sequence, 335 residues long: Ketol-acid reductoisomerase (NADP(+)) (335 aa).

The KARI N-terminal Rossmann domain maps to 2–182; sequence AKIIYDNETT…GATRAGVYET (181 aa). NADP(+) is bound by residues 25–28, arginine 48, serine 51, serine 53, and 83–86; these read YGSQ and DENQ. The active site involves histidine 108. An NADP(+)-binding site is contributed by glycine 134. The region spanning 183–328 is the KARI C-terminal knotted domain; sequence TFREETETDL…KQIRANIPWL (146 aa). Residues aspartate 191, glutamate 195, glutamate 227, and glutamate 231 each contribute to the Mg(2+) site. Serine 252 contributes to the substrate binding site.

The protein belongs to the ketol-acid reductoisomerase family. The cofactor is Mg(2+).

It catalyses the reaction (2R)-2,3-dihydroxy-3-methylbutanoate + NADP(+) = (2S)-2-acetolactate + NADPH + H(+). The enzyme catalyses (2R,3R)-2,3-dihydroxy-3-methylpentanoate + NADP(+) = (S)-2-ethyl-2-hydroxy-3-oxobutanoate + NADPH + H(+). It functions in the pathway amino-acid biosynthesis; L-isoleucine biosynthesis; L-isoleucine from 2-oxobutanoate: step 2/4. Its pathway is amino-acid biosynthesis; L-valine biosynthesis; L-valine from pyruvate: step 2/4. Involved in the biosynthesis of branched-chain amino acids (BCAA). Catalyzes an alkyl-migration followed by a ketol-acid reduction of (S)-2-acetolactate (S2AL) to yield (R)-2,3-dihydroxy-isovalerate. In the isomerase reaction, S2AL is rearranged via a Mg-dependent methyl migration to produce 3-hydroxy-3-methyl-2-ketobutyrate (HMKB). In the reductase reaction, this 2-ketoacid undergoes a metal-dependent reduction by NADPH to yield (R)-2,3-dihydroxy-isovalerate. The sequence is that of Ketol-acid reductoisomerase (NADP(+)) from Methanosarcina barkeri (strain Fusaro / DSM 804).